Here is an 86-residue protein sequence, read N- to C-terminus: Large ribosomal subunit protein bL27 (86 aa).

The segment at 1 to 21 (MAHKKGGGSSRNGRDSESKRL) is disordered.

It belongs to the bacterial ribosomal protein bL27 family.

This Rubrobacter xylanophilus (strain DSM 9941 / JCM 11954 / NBRC 16129 / PRD-1) protein is Large ribosomal subunit protein bL27.